Reading from the N-terminus, the 761-residue chain is Probable beta-galactosidase 2 (761 aa).

Positions 1–23 (MGTIKNNFQLLWLILLIVVLVNG) are cleaved as a signal peptide. N-linked (GlcNAc...) asparagine glycosylation is found at N39 and N110. The active-site Proton donor is the E195. An N-linked (GlcNAc...) asparagine glycan is attached at N206. E267 acts as the Nucleophile in catalysis. Residues N385, N405, N438, N501, N552, N553, N577, N592, N642, N690, and N696 are each glycosylated (N-linked (GlcNAc...) asparagine).

Belongs to the glycosyl hydrolase 35 family.

The enzyme catalyses Hydrolysis of terminal non-reducing beta-D-galactose residues in beta-D-galactosides.. Cleaves beta-linked terminal galactosyl residues from gangliosides, glycoproteins, and glycosaminoglycans. This chain is Probable beta-galactosidase 2 (glb2), found in Dictyostelium discoideum (Social amoeba).